The primary structure comprises 250 residues: 5'-nucleotidase SurE (250 aa).

Positions 8, 9, 40, and 95 each coordinate a divalent metal cation.

The protein belongs to the SurE nucleotidase family. It depends on a divalent metal cation as a cofactor.

The protein resides in the cytoplasm. The catalysed reaction is a ribonucleoside 5'-phosphate + H2O = a ribonucleoside + phosphate. Nucleotidase that shows phosphatase activity on nucleoside 5'-monophosphates. This chain is 5'-nucleotidase SurE, found in Nitratidesulfovibrio vulgaris (strain ATCC 29579 / DSM 644 / CCUG 34227 / NCIMB 8303 / VKM B-1760 / Hildenborough) (Desulfovibrio vulgaris).